The chain runs to 175 residues: Large ribosomal subunit protein bL17m (175 aa).

The transit peptide at 1–8 directs the protein to the mitochondrion; sequence MRLSVCAA. The interval 155-175 is disordered; sequence DLSQSQEASNHSSHTAQTPGI. Residues 157-175 are compositionally biased toward polar residues; sequence SQSQEASNHSSHTAQTPGI.

This sequence belongs to the bacterial ribosomal protein bL17 family. As to quaternary structure, component of the mitochondrial ribosome large subunit (39S) which comprises a 16S rRNA and about 50 distinct proteins.

It localises to the mitochondrion. The polypeptide is Large ribosomal subunit protein bL17m (MRPL17) (Pongo abelii (Sumatran orangutan)).